The chain runs to 380 residues: ATPase ASNA1 homolog (380 aa).

Residue 48–55 coordinates ATP; it reads KGGVGKTT. Asp-77 is a catalytic residue. 2 residues coordinate ATP: Glu-248 and Asn-275.

This sequence belongs to the arsA ATPase family. In terms of assembly, homodimer.

The protein resides in the cytoplasm. Its subcellular location is the endoplasmic reticulum. Its function is as follows. ATPase required for the post-translational delivery of tail-anchored (TA) proteins to the endoplasmic reticulum. Recognizes and selectively binds the transmembrane domain of TA proteins in the cytosol. This complex then targets to the endoplasmic reticulum by membrane-bound receptors, where the tail-anchored protein is released for insertion. This process is regulated by ATP binding and hydrolysis. ATP binding drives the homodimer towards the closed dimer state, facilitating recognition of newly synthesized TA membrane proteins. ATP hydrolysis is required for insertion. Subsequently, the homodimer reverts towards the open dimer state, lowering its affinity for the membrane-bound receptor, and returning it to the cytosol to initiate a new round of targeting. The protein is ATPase ASNA1 homolog of Plasmodium chabaudi chabaudi.